The chain runs to 427 residues: Delta(14)-sterol reductase (427 aa).

Residues 1–25 are Cytoplasmic-facing; it reads MSEQESRDNAAVDAVRQKYGFGFSW. The chain crosses the membrane as a helical span at residues 26–46; it reads LVLMIALPPLVYYLWICVTYY. The Periplasmic segment spans residues 47-70; sequence QGELVFTSDAAAWRRFWSHVAPPT. A helical transmembrane segment spans residues 71–91; it reads WHAAGLYAAWFLGQAALQVWA. Topologically, residues 92-110 are cytoplasmic; that stretch reads PGPTVQGMKLPDGSRLDYR. Residues 111–131 form a helical membrane-spanning segment; the sequence is MNGIFSFLFTLAVVFGLVTMG. The Periplasmic portion of the chain corresponds to 132–141; the sequence is WLDATVLYDQ. Residues 142-162 traverse the membrane as a helical segment; it reads LGPLLTVVNIFTFVFAGFLYF. The Cytoplasmic segment spans residues 163 to 197; that stretch reads WGLNGKQWERPTGRPFYDYFMGTALNPRIGSLDLK. A helical transmembrane segment spans residues 198–218; sequence LFCEARPGMIFWLLMNLSMAA. Over 219–226 the chain is Periplasmic; the sequence is KQYELHGT. A helical membrane pass occupies residues 227 to 247; sequence VTVPMLLVVGFQSFYLIDYFI. Over 248–262 the chain is Cytoplasmic; it reads HEEAVLTTWDIKHEK. The helical transmembrane segment at 263–283 threads the bilayer; it reads FGWMLCWGDLVWLPFTYTLQA. The Periplasmic segment spans residues 284–291; it reads QYLVHHTH. Residues 292 to 312 form a helical membrane-spanning segment; the sequence is DLPVWGIIAIVALNLAGYAIF. At 313 to 356 the chain is on the cytoplasmic side; the sequence is RGANIQKHHFRRDPNRIVWGKPAKYIKTKQGSLLLTSGWWGIAR. Residues Lys319, Arg323, Leu347, Trp352, and 359–360 contribute to the NADP(+) site; that span reads NY. Residues 357-377 form a helical membrane-spanning segment; sequence HMNYFGDLMIALSWCLPAAFG. Residue Ser378 is a topological domain, periplasmic. Residues 379–399 traverse the membrane as a helical segment; it reads PIPYFHIVYFTILLLHREKRD. NADP(+) contacts are provided by residues Asp399, 403–407, and Tyr414; that span reads CLAKY. Residues 400-427 are Cytoplasmic-facing; sequence DAMCLAKYGEDWLQYRKKVPWRIVPKIY.

Belongs to the ERG4/ERG24 family.

The protein localises to the cell inner membrane. The catalysed reaction is 4,4-dimethyl-5alpha-cholesta-8,24-dien-3beta-ol + NADP(+) = 4,4-dimethyl-5alpha-cholesta-8,14,24-trien-3beta-ol + NADPH + H(+). It participates in steroid biosynthesis; zymosterol biosynthesis; zymosterol from lanosterol. Its function is as follows. Reduces the C14=C15 double bond of 4,4-dimethyl-cholesta-8,14,24-trienol to produce 4,4-dimethyl-cholesta-8,24-dienol. Complements the deletion of the Delta(14)-sterol reductase gene ERG24 in yeast. In Methylotuvimicrobium alcaliphilum (strain DSM 19304 / NCIMB 14124 / VKM B-2133 / 20Z) (Methylomicrobium alcaliphilum), this protein is Delta(14)-sterol reductase.